A 539-amino-acid chain; its full sequence is Monocarboxylate transporter 8 (539 aa).

The disordered stretch occupies residues 1 to 92; it reads MALQSQASEE…VETRGTARGF (92 aa). Residue A2 is modified to N-acetylalanine. Residues 2-96 are Cytoplasmic-facing; that stretch reads ALQSQASEEA…GTARGFQPPE (95 aa). Residues 31-41 are compositionally biased toward acidic residues; sequence PESEPEPEPEP. Over residues 42 to 64 the composition is skewed to pro residues; it reads EPVPVPPPEPQPEPQPLPDPAPL. Residues 97 to 117 traverse the membrane as a helical segment; that stretch reads GGFGWVVVFAATWCNGSIFGI. The Extracellular segment spans residues 118 to 143; sequence HNSVGILYSMLLEEEKEKNRQVEFQA. Residues 144–164 form a helical membrane-spanning segment; it reads AWVGALAMGMIFFCSPIVSIF. Residues 165–171 are Cytoplasmic-facing; that stretch reads TDRLGCR. A helical membrane pass occupies residues 172–192; it reads ITATAGAAVAFIGLHTSSFTS. Residues 193–200 are Extracellular-facing; the sequence is SLSLRYFT. The chain crosses the membrane as a helical span at residues 201–221; that stretch reads YGILFGCGCSFAFQPSLVILG. Residues 222-229 are Cytoplasmic-facing; the sequence is HYFQRRLG. A helical membrane pass occupies residues 230 to 250; that stretch reads LANGVVSAGSSIFSMSFPFLI. At 251 to 258 the chain is on the extracellular side; that stretch reads RMLGDKIK. The helical transmembrane segment at 259–279 threads the bilayer; sequence LAQTFQVLSTFMFVLMLLSLT. Residues 280 to 322 are Cytoplasmic-facing; the sequence is YRPLLPSSQDTPSKRGVRTLHQRFLAQLRKYFNMRVFRQRTYR. Residues 323-343 form a helical membrane-spanning segment; the sequence is IWAFGIAAAALGYFVPYVHLM. Residues 344 to 356 lie on the Extracellular side of the membrane; it reads KYVEEEFSEIKET. Residues 357 to 377 form a helical membrane-spanning segment; it reads WVLLVCIGATSGLGRLVSGHI. At 378–386 the chain is on the cytoplasmic side; that stretch reads SDSIPGLKK. Residues 387-407 form a helical membrane-spanning segment; that stretch reads IYLQVLSFLLLGLMSMMIPLC. Residues 408-409 are Extracellular-facing; the sequence is RD. The helical transmembrane segment at 410 to 430 threads the bilayer; sequence FGGLIVVCLFLGLCDGFFITI. Residues 431–447 are Cytoplasmic-facing; sequence MAPIAFELVGPMQASQA. A helical membrane pass occupies residues 448–468; it reads IGYLLGMMALPMIAGPPIAGL. Topologically, residues 469–477 are extracellular; sequence LRNCFGDYH. Residues 478-498 traverse the membrane as a helical segment; the sequence is VAFYFAGVPPIIGAVILFFVP. The Cytoplasmic segment spans residues 499–539; that stretch reads LMHQRMFKKEQRDSSKDKMLAPDPDPNGELLPGSPNPEEPI. A compositionally biased stretch (basic and acidic residues) spans 508–518; that stretch reads EQRDSSKDKML. Residues 508 to 539 are disordered; it reads EQRDSSKDKMLAPDPDPNGELLPGSPNPEEPI.

Belongs to the major facilitator superfamily. Monocarboxylate porter (TC 2.A.1.13) family. As to quaternary structure, monomer. Homodimer. Homooligomer. Highly expressed in liver and heart. In adult brain tissue expression is largely confined to endothelial cells of the blood-brain barrier (at protein level).

Its subcellular location is the cell membrane. It is found in the apical cell membrane. It catalyses the reaction 3,3',5-triiodo-L-thyronine(out) = 3,3',5-triiodo-L-thyronine(in). The catalysed reaction is L-thyroxine(out) = L-thyroxine(in). It carries out the reaction 3,3',5'-triiodo-L-thyronine(out) = 3,3',5'-triiodo-L-thyronine(in). The enzyme catalyses 3,3'-diiodo-L-thyronine(out) = 3,3'-diiodo-L-thyronine(in). Its function is as follows. Specific thyroid hormone transmembrane transporter, that mediates both uptake and efflux of thyroid hormones across the cell membrane independently of pH or a Na(+) gradient. Major substrates are the iodothyronines T3 and T4 and to a lesser extent rT3 and 3,3-diiodothyronine (3,3'-T2). Acts as an important mediator of thyroid hormone transport, especially T3, through the blood-brain barrier. This is Monocarboxylate transporter 8 (SLC16A2) from Homo sapiens (Human).